The primary structure comprises 606 residues: Phosphoenolpyruvate carboxykinase [GTP] (606 aa).

Residues arginine 79 and 218 to 220 (YGG) each bind substrate. Residues lysine 227 and histidine 247 each contribute to the Mn(2+) site. Serine 269 contributes to the substrate binding site. A GTP-binding site is contributed by 270 to 275 (ACGKTN). The active site involves cysteine 271. Aspartate 294 is a Mn(2+) binding site. 384–386 (NSR) is a substrate binding site. GTP-binding positions include arginine 386, arginine 417, and 512 to 515 (FGEN).

Belongs to the phosphoenolpyruvate carboxykinase [GTP] family. As to quaternary structure, monomer. Mn(2+) is required as a cofactor.

Its subcellular location is the cytoplasm. It carries out the reaction oxaloacetate + GTP = phosphoenolpyruvate + GDP + CO2. Its pathway is carbohydrate biosynthesis; gluconeogenesis. Its function is as follows. Catalyzes the conversion of oxaloacetate (OAA) to phosphoenolpyruvate (PEP), the rate-limiting step in the metabolic pathway that produces glucose from lactate and other precursors derived from the citric acid cycle. The polypeptide is Phosphoenolpyruvate carboxykinase [GTP] (Corynebacterium jeikeium (strain K411)).